The primary structure comprises 349 residues: Hydroxymethylglutaryl-CoA synthase (349 aa).

D29 and A30 together coordinate (3S)-3-hydroxy-3-methylglutaryl-CoA. E81 serves as the catalytic Proton donor/acceptor. The (3S)-3-hydroxy-3-methylglutaryl-CoA site is built by C113, T154, T202, and H235. Catalysis depends on C113, which acts as the Acyl-thioester intermediate. H235 (proton donor/acceptor) is an active-site residue. A CoA-binding site is contributed by R240. (3S)-3-hydroxy-3-methylglutaryl-CoA is bound by residues R244, N267, and S297.

This sequence belongs to the thiolase-like superfamily. Archaeal HMG-CoA synthase family. In terms of assembly, interacts with acetoacetyl-CoA thiolase that catalyzes the precedent step in the pathway and with a DUF35 protein. The acetoacetyl-CoA thiolase/HMG-CoA synthase complex channels the intermediate via a fused CoA-binding site, which allows for efficient coupling of the endergonic thiolase reaction with the exergonic HMGCS reaction.

The enzyme catalyses acetoacetyl-CoA + acetyl-CoA + H2O = (3S)-3-hydroxy-3-methylglutaryl-CoA + CoA + H(+). Its pathway is metabolic intermediate biosynthesis; (R)-mevalonate biosynthesis; (R)-mevalonate from acetyl-CoA: step 2/3. In terms of biological role, catalyzes the condensation of acetyl-CoA with acetoacetyl-CoA to form 3-hydroxy-3-methylglutaryl-CoA (HMG-CoA). Functions in the mevalonate (MVA) pathway leading to isopentenyl diphosphate (IPP), a key precursor for the biosynthesis of isoprenoid compounds that are building blocks of archaeal membrane lipids. This chain is Hydroxymethylglutaryl-CoA synthase, found in Caldivirga maquilingensis (strain ATCC 700844 / DSM 13496 / JCM 10307 / IC-167).